A 430-amino-acid polypeptide reads, in one-letter code: Enolase (430 aa).

Residue glutamine 163 coordinates (2R)-2-phosphoglycerate. Glutamate 205 serves as the catalytic Proton donor. Aspartate 242, glutamate 287, and aspartate 314 together coordinate Mg(2+). Lysine 339, arginine 368, serine 369, and lysine 390 together coordinate (2R)-2-phosphoglycerate. The Proton acceptor role is filled by lysine 339.

The protein belongs to the enolase family. Mg(2+) serves as cofactor.

The protein localises to the cytoplasm. The protein resides in the secreted. It is found in the cell surface. It catalyses the reaction (2R)-2-phosphoglycerate = phosphoenolpyruvate + H2O. Its pathway is carbohydrate degradation; glycolysis; pyruvate from D-glyceraldehyde 3-phosphate: step 4/5. Catalyzes the reversible conversion of 2-phosphoglycerate (2-PG) into phosphoenolpyruvate (PEP). It is essential for the degradation of carbohydrates via glycolysis. This chain is Enolase, found in Bacillus licheniformis (strain ATCC 14580 / DSM 13 / JCM 2505 / CCUG 7422 / NBRC 12200 / NCIMB 9375 / NCTC 10341 / NRRL NRS-1264 / Gibson 46).